Consider the following 458-residue polypeptide: Transcription factor verZ (458 aa).

Residues 117–144 constitute a DNA-binding region (zn(2)-C6 fungal-type); sequence CDRCQAAKVKCGHEKPSCRRCTYHKVEC. Disordered regions lie at residues 153–256 and 435–458; these read GRPR…MQSM and MEEE…EDGK. Composition is skewed to polar residues over residues 167–186, 193–207, and 223–235; these read PSPQ…SKSA, FTGT…QSPV, and RAEP…TTNF.

It localises to the nucleus. Its function is as follows. Transcription factor; part of the gene cluster that mediates the biosynthesis of 11'-deoxyverticillin A, one of the dimeric epipolythiodioxopiperazines (ETPs) from the verticillin family that act as mycotoxins. 11'-deoxyverticillin A is required for normal conidiation. Directly binds the consensus motif 5'-(T/C)(C/A)(G/T)GN3CC(G/T)(A/G)(G/C)-3' localized in the upstream regions of the verticillin biosynthetic genes. In Clonostachys rogersoniana, this protein is Transcription factor verZ.